Consider the following 353-residue polypeptide: Farnesyl pyrophosphate synthase (353 aa).

Isopentenyl diphosphate-binding residues include lysine 57, arginine 60, and glutamine 96. Lysine 57 carries the post-translational modification N6-(2-hydroxyisobutyryl)lysine; alternate. Lysine 57 carries the N6-acetyllysine; alternate modification. The Mg(2+) site is built by aspartate 103 and aspartate 107. Position 112 (arginine 112) interacts with dimethylallyl diphosphate. Arginine 113 is a binding site for isopentenyl diphosphate. Dimethylallyl diphosphate is bound by residues lysine 200, threonine 201, glutamine 240, lysine 257, and lysine 266.

This sequence belongs to the FPP/GGPP synthase family. In terms of assembly, homodimer. Interacts with RSAD2. Interacts with bovine leukemia virus (BLV) protein G4. Mg(2+) serves as cofactor.

It localises to the cytoplasm. It catalyses the reaction isopentenyl diphosphate + dimethylallyl diphosphate = (2E)-geranyl diphosphate + diphosphate. It carries out the reaction isopentenyl diphosphate + (2E)-geranyl diphosphate = (2E,6E)-farnesyl diphosphate + diphosphate. The protein operates within isoprenoid biosynthesis; farnesyl diphosphate biosynthesis; farnesyl diphosphate from geranyl diphosphate and isopentenyl diphosphate: step 1/1. Its pathway is isoprenoid biosynthesis; geranyl diphosphate biosynthesis; geranyl diphosphate from dimethylallyl diphosphate and isopentenyl diphosphate: step 1/1. Inactivated by interferon-induced RSAD2. This inactivation may result of disruption of lipid rafts at the plasma membrane, and thus have an antiviral effect since many enveloped viruses need lipid rafts to bud efficiently out of the cell. Key enzyme in isoprenoid biosynthesis which catalyzes the formation of farnesyl diphosphate (FPP), a precursor for several classes of essential metabolites including sterols, dolichols, carotenoids, and ubiquinones. FPP also serves as substrate for protein farnesylation and geranylgeranylation. Catalyzes the sequential condensation of isopentenyl pyrophosphate with the allylic pyrophosphates, dimethylallyl pyrophosphate, and then with the resultant geranylpyrophosphate to the ultimate product farnesyl pyrophosphate. The sequence is that of Farnesyl pyrophosphate synthase (FDPS) from Bos taurus (Bovine).